The chain runs to 240 residues: MIAFIVLPILAAVLQQSSGNVDFDSESPRKPEIQNEIIDLHNSLRRSVNPTASNMLKMEWYPEAAANAERWAYRCIESHSSRDSRVIGGIKCGENIYMATYPAKWTDIIHAWHGEYKDFKYGVGAVPSDAVIGHYTQIVWYKSYRAGCAAAYCPSSKYSYFYVCQYCPAGNIIGKTATPYKSGPPCGDCPSDCDNGLCTNPCTRENEFTNCDSLVQKSSCQDNYMKSKCPASCFCQNKII.

Positions 1 to 19 are cleaved as a signal peptide; it reads MIAFIVLPILAAVLQQSSG. Residues 39 to 166 form the SCP domain; sequence DLHNSLRRSV…KYSYFYVCQY (128 aa). 8 disulfide bridges follow: C75–C153, C92–C167, C148–C164, C186–C193, C189–C198, C202–C235, C211–C229, and C220–C233. In terms of domain architecture, ShKT spans 202–235; sequence CTRENEFTNCDSLVQKSSCQDNYMKSKCPASCFC.

It belongs to the CRISP family. Forms a stable, non-covalent complex with SSP-2. Expressed by the venom gland.

Its subcellular location is the secreted. Functionally, blocks contraction of smooth muscle elicited by high potassium-induced depolarization. May target voltage-gated calcium channels (Cav) on smooth muscle. In Protobothrops flavoviridis (Habu), this protein is Cysteine-rich venom protein triflin.